The chain runs to 117 residues: MDKKAARIRRATRARRKLQELGATRLVVHRTPRHIYAQVIAPNGSETLVAASTTEKAINEQLKYTGNKEAAAAVGKAIAERALEKGIKDVSFDRSGFQYHGRVQALADAAREAGLQF.

The protein belongs to the universal ribosomal protein uL18 family. In terms of assembly, part of the 50S ribosomal subunit; part of the 5S rRNA/L5/L18/L25 subcomplex. Contacts the 5S and 23S rRNAs.

Its function is as follows. This is one of the proteins that bind and probably mediate the attachment of the 5S RNA into the large ribosomal subunit, where it forms part of the central protuberance. This is Large ribosomal subunit protein uL18 from Photorhabdus laumondii subsp. laumondii (strain DSM 15139 / CIP 105565 / TT01) (Photorhabdus luminescens subsp. laumondii).